We begin with the raw amino-acid sequence, 502 residues long: MSIKPEEISSLIKQQIENFQSDVQVQDVGTVIRVGDGIALAHGLESVMAGELLEFSNGVMGMAQNLEENNVGIIILGPYSEIREGDEVKRTGRIMEVPVGEELLGRVVNPLGQPIDGRGPIETSKTRPIESPAPGVMDRKSVHEPLQTGIKSIDSMIPVGRGQRELIIGDRQTGKTSIAIDTIINQKDQDMICIYVAIGQKESTVAGVVETLRQHGALDYTIVVSASASEPAPLLFLAPYAGVSMGEEFMYNGKHVLVVYDDLTKQAAAYRELSLLLRRPPGREAYPGDVFYLHSRLLERAAKLSDAKGGGSITALPFIETQAGDVSAYIPTNVISITDGQIFLQSDLFYSGVRPAVNAGLSVSRVGGSAQIKAMKKVSGTLRLDLAAYRELEAFAQFGSDLDKATQAKLNRGQRTVEVLKQGLHEPLPVEKQVAIIYALINGFLDDIPVGDVRRFESELFTFLDHNKKELLDHIRTTGNLPDDSEFKAAITEFKQGFVTTK.

Residues 114–139 (PIDGRGPIETSKTRPIESPAPGVMDR) are disordered. 169 to 176 (GDRQTGKT) is a binding site for ATP.

Belongs to the ATPase alpha/beta chains family. In terms of assembly, F-type ATPases have 2 components, CF(1) - the catalytic core - and CF(0) - the membrane proton channel. CF(1) has five subunits: alpha(3), beta(3), gamma(1), delta(1), epsilon(1). CF(0) has three main subunits: a(1), b(2) and c(9-12). The alpha and beta chains form an alternating ring which encloses part of the gamma chain. CF(1) is attached to CF(0) by a central stalk formed by the gamma and epsilon chains, while a peripheral stalk is formed by the delta and b chains.

The protein resides in the cell membrane. The catalysed reaction is ATP + H2O + 4 H(+)(in) = ADP + phosphate + 5 H(+)(out). Produces ATP from ADP in the presence of a proton gradient across the membrane. The alpha chain is a regulatory subunit. In Halalkalibacterium halodurans (strain ATCC BAA-125 / DSM 18197 / FERM 7344 / JCM 9153 / C-125) (Bacillus halodurans), this protein is ATP synthase subunit alpha.